The primary structure comprises 96 residues: uncharacterized protein (96 aa).

A helical transmembrane segment spans residues 53–71 (VLLMPLLQSFVLSLALMGV).

The protein resides in the membrane. This is an uncharacterized protein from Saccharomyces cerevisiae (strain ATCC 204508 / S288c) (Baker's yeast).